Here is a 186-residue protein sequence, read N- to C-terminus: TATA-box-binding protein (186 aa).

2 repeat units span residues I10 to L86 and V101 to L179.

This sequence belongs to the TBP family.

Its function is as follows. General factor that plays a role in the activation of archaeal genes transcribed by RNA polymerase. Binds specifically to the TATA box promoter element which lies close to the position of transcription initiation. This is TATA-box-binding protein from Haloarcula marismortui (strain ATCC 43049 / DSM 3752 / JCM 8966 / VKM B-1809) (Halobacterium marismortui).